The chain runs to 300 residues: N-acetylmuramic acid 6-phosphate etherase (300 aa).

An SIS domain is found at 57 to 220 (IAVAFQSGGR…TTGAMIRTGK (164 aa)). The active-site Proton donor is the Glu85. The active site involves Glu116.

Belongs to the GCKR-like family. MurNAc-6-P etherase subfamily. As to quaternary structure, homodimer.

The enzyme catalyses N-acetyl-D-muramate 6-phosphate + H2O = N-acetyl-D-glucosamine 6-phosphate + (R)-lactate. The protein operates within amino-sugar metabolism; 1,6-anhydro-N-acetylmuramate degradation. It participates in amino-sugar metabolism; N-acetylmuramate degradation. Its pathway is cell wall biogenesis; peptidoglycan recycling. Its function is as follows. Specifically catalyzes the cleavage of the D-lactyl ether substituent of MurNAc 6-phosphate, producing GlcNAc 6-phosphate and D-lactate. Together with AnmK, is also required for the utilization of anhydro-N-acetylmuramic acid (anhMurNAc) either imported from the medium or derived from its own cell wall murein, and thus plays a role in cell wall recycling. In Aliivibrio fischeri (strain ATCC 700601 / ES114) (Vibrio fischeri), this protein is N-acetylmuramic acid 6-phosphate etherase.